A 576-amino-acid chain; its full sequence is RNA-binding post-transcriptional regulator cip2 (576 aa).

In terms of domain architecture, RRM spans 232–310 (TAIVIKNIPF…RRLRVEWKRQ (79 aa)). Residues 355 to 420 (DPAILNVYSH…AKQVVITMPS (66 aa)) form the R3H domain.

In terms of assembly, interacts with csx1. Phosphorylated by sty1.

Its subcellular location is the cytoplasm. Regulates global gene expression after oxidative stress. Interacts and stabilizes mRNAs and may regulate their transition between different cytoplasmic components after oxidative stress. This chain is RNA-binding post-transcriptional regulator cip2 (cip2), found in Schizosaccharomyces pombe (strain 972 / ATCC 24843) (Fission yeast).